A 107-amino-acid chain; its full sequence is FK506-binding protein 1 (107 aa).

Residues 19–107 (GSNVTVHHAG…VFEVELITFK (89 aa)) enclose the PPIase FKBP-type domain.

This sequence belongs to the FKBP-type PPIase family.

It catalyses the reaction [protein]-peptidylproline (omega=180) = [protein]-peptidylproline (omega=0). With respect to regulation, inhibited by both FK506 and rapamycin. PPIases accelerate the folding of proteins by catalyzing the cis-trans isomerization of proline imidic peptide bonds in oligopeptides. This chain is FK506-binding protein 1 (fkbp1), found in Dictyostelium discoideum (Social amoeba).